The chain runs to 223 residues: Twisted gastrulation protein homolog 1 (223 aa).

Residues 1–25 (MKLHYVAVLTLAILMFLTWLPESLS) form the signal peptide. 2 N-linked (GlcNAc...) asparagine glycosylation sites follow: Asn52 and Asn81.

This sequence belongs to the twisted gastrulation protein family. As to quaternary structure, interacts with CHRD and BMP4. This interaction enhances CHRD/BMP4 complex formation. Interacts with BMP7.

It localises to the secreted. Its function is as follows. May be involved in dorsoventral axis formation. Seems to antagonize BMP signaling by forming ternary complexes with CHRD and BMPs, thereby preventing BMPs from binding to their receptors. In addition to the anti-BMP function, also has pro-BMP activity, partly mediated by cleavage and degradation of CHRD, which releases BMPs from ternary complexes. May be an important modulator of BMP-regulated cartilage development and chondrocyte differentiation. May play a role in thymocyte development. The sequence is that of Twisted gastrulation protein homolog 1 (TWSG1) from Homo sapiens (Human).